We begin with the raw amino-acid sequence, 263 residues long: tRNA dimethylallyltransferase (263 aa).

This sequence belongs to the IPP transferase family. In terms of assembly, monomer. Mg(2+) serves as cofactor.

It carries out the reaction adenosine(37) in tRNA + dimethylallyl diphosphate = N(6)-dimethylallyladenosine(37) in tRNA + diphosphate. In terms of biological role, catalyzes the transfer of a dimethylallyl group onto the adenine at position 37 in tRNAs that read codons beginning with uridine, leading to the formation of N6-(dimethylallyl)adenosine (i(6)A). The sequence is that of tRNA dimethylallyltransferase from Leifsonia xyli subsp. xyli (strain CTCB07).